Here is a 501-residue protein sequence, read N- to C-terminus: Aspartate--tRNA ligase, cytoplasmic (501 aa).

Phosphothreonine is present on Thr52. N6-acetyllysine is present on Lys74. Residue Glu229 participates in L-aspartate binding. Ser249 is subject to Phosphoserine. Positions 251–254 (QLYK) are aspartate. Arg273 contributes to the L-aspartate binding site. Residues 273-275 (RAE) and 281-283 (RHL) contribute to the ATP site. Position 374 is an N6-acetyllysine (Lys374). Positions 411–415 (KQSNS) are binding site for the 3'-end of tRNA. Glu424 serves as a coordination point for ATP. 2 residues coordinate L-aspartate: Ser427 and Arg431. Residue 472 to 475 (GLER) coordinates ATP. Residue Thr500 is modified to Phosphothreonine; by PKA.

Belongs to the class-II aminoacyl-tRNA synthetase family. Type 2 subfamily. As to quaternary structure, homodimer. Part of a multisubunit complex that groups tRNA ligases for Arg (RARS1), Asp (DARS1), Gln (QARS1), Ile (IARS1), Leu (LARS1), Lys (KARS1), Met (MARS1) the bifunctional ligase for Glu and Pro (EPRS1) and the auxiliary subunits AIMP1/p43, AIMP2/p38 and EEF1E1/p18.

It is found in the cytoplasm. It carries out the reaction tRNA(Asp) + L-aspartate + ATP = L-aspartyl-tRNA(Asp) + AMP + diphosphate. Functionally, catalyzes the specific attachment of an amino acid to its cognate tRNA in a 2 step reaction: the amino acid (AA) is first activated by ATP to form AA-AMP and then transferred to the acceptor end of the tRNA. The protein is Aspartate--tRNA ligase, cytoplasmic (DARS1) of Bos taurus (Bovine).